The sequence spans 870 residues: Importin subunit beta-1 (870 aa).

Ala2 bears the N-acetylalanine mark. HEAT repeat units lie at residues 4–33, 35–67, 87–126, 132–161, 172–204, 214–249, 255–304, 313–361, 365–395, 403–440, 456–492, 498–535, 542–588, 596–637, 642–679, 684–722, 730–776, and 826–868; these read EVTQ…FQEQ, LAGF…KNAL, MSTK…ELPQ, LIVS…LCEE, VNKI…YMAL, DMER…IAST, AHYM…EFAG, FTKQ…RAVG, VPHV…GSIL, LMAI…IFEF, CQQI…EDIG, TPFF…EVVR, STMV…QVII, TKSK…AYAA, AKYM…CRAL, LPYC…ALAI, WRYS…FQGF, and SHVG…TRAI. An Importin N-terminal domain is found at 23–103; sequence AEESLKQFQE…RAFLLKTLSA (81 aa).

It belongs to the importin beta family. Importin beta-1 subfamily. In terms of assembly, forms a complex with the importin subunits alpha IMPA1 or IMPA2, the nucleoporin NUP62 and the Ran-GTP-binding proteins RAN1, RAN2 or RAN3. In terms of tissue distribution, expressed in roots, cotyledons, leaves, stems, petals, stamen, stigma, siliques, embryos and guard cells.

The protein localises to the cytoplasm. It localises to the nucleus. In terms of biological role, acts as a negative effector of drought tolerance. Involved in the regulation of stomatal closure and in the abscisic acid (ABA)-mediated pathway that lead to drought tolerance. Does not directly mediate nuclear import of ABI1 and ABI2 which are key regulators of the ABA signaling pathway. May be involved in nuclear translocation of other type 2C protein phosphatases that mediate ABA signaling. This is Importin subunit beta-1 from Arabidopsis thaliana (Mouse-ear cress).